A 501-amino-acid polypeptide reads, in one-letter code: MLKTSNLISSLLHNNLKNTSILRNKSIFYYSTNSNNNNNNNNNNNNNNNNNKNINLQNIKGTYDLFPNEQRIHKFIFDVGRGVAERYGFKEISTPIIEPFELFNRSVGESSDIVMKEMFKFKDYSNESSSPPSMICLRPEGTAGVIRAIINQSSTNHLTPAQRYYYQGPMFRYERPQRGRQRQFHQLGVELIGDQHPRSDVEIIDMAMNFIERLGINKSDTLLKINSLGDTDSIKVYNETLKRFYNDNVNKLSPISIKRLERGNSLRILDSKERQDIELNKLAPSIQDSLSIQCKDRFNNVLKGLDCLGISYEIDKSLVRGLDYYRHTIFEIQIIDNNQNNKGQRQQQQQQQGLAILGGGRYDGLANQLGYKYKEILPSIGWASGIERMVLFLDQSKIPNSIRPIGIAITDSSLSENAFKLCSNLRRNGWSSTLSTFNLEDENLSKQLKKFKNNPSFVIILAPSEYSNNTVIIKNMDDTTQSIIPLNEIDNFLENNKVLKN.

Positions 32 to 54 are disordered; the sequence is TNSNNNNNNNNNNNNNNNNNKNI. A compositionally biased stretch (low complexity) spans 33–54; it reads NSNNNNNNNNNNNNNNNNNKNI.

This sequence belongs to the class-II aminoacyl-tRNA synthetase family.

Its subcellular location is the mitochondrion matrix. The enzyme catalyses tRNA(His) + L-histidine + ATP = L-histidyl-tRNA(His) + AMP + diphosphate + H(+). This chain is Probable histidine--tRNA ligase, mitochondrial (mhisS), found in Dictyostelium discoideum (Social amoeba).